The following is a 369-amino-acid chain: Molybdenum import ATP-binding protein ModC 1 (369 aa).

In terms of domain architecture, ABC transporter spans 10–240 (KGYIEVAFNG…PALASRSEAA (231 aa)). 42–49 (GPPGCGKT) lines the ATP pocket. Residues 297 to 367 (ASSILNVFRA…ELCGKLGDDG (71 aa)) enclose the Mop domain.

It belongs to the ABC transporter superfamily. Molybdate importer (TC 3.A.1.8) family. In terms of assembly, the complex is composed of two ATP-binding proteins (ModC), two transmembrane proteins (ModB) and a solute-binding protein (ModA).

The protein resides in the cell inner membrane. The enzyme catalyses molybdate(out) + ATP + H2O = molybdate(in) + ADP + phosphate + H(+). Its function is as follows. Part of the ABC transporter complex ModABC involved in molybdenum import. Responsible for energy coupling to the transport system. This chain is Molybdenum import ATP-binding protein ModC 1, found in Bradyrhizobium diazoefficiens (strain JCM 10833 / BCRC 13528 / IAM 13628 / NBRC 14792 / USDA 110).